Reading from the N-terminus, the 247-residue chain is Probable transcriptional regulatory protein PC1_1817 (247 aa).

Belongs to the TACO1 family.

The protein localises to the cytoplasm. The sequence is that of Probable transcriptional regulatory protein PC1_1817 from Pectobacterium carotovorum subsp. carotovorum (strain PC1).